We begin with the raw amino-acid sequence, 89 residues long: Cell division protein FtsL (89 aa).

Residues 1–6 lie on the Cytoplasmic side of the membrane; the sequence is MAMNKL. The helical transmembrane segment at 7–24 threads the bilayer; that stretch reads NFLLLLAVCVSAFSVVMQ. Topologically, residues 25–89 are periplasmic; it reads QNQYRLNFTA…GNTFMVEHQR (65 aa). A coiled-coil region spans residues 33-73; sequence TALDKAKKQEIALEQDYAQMRLQQARLANHEAIRAAAEKQN.

The protein belongs to the FtsL family. Part of a complex composed of FtsB, FtsL and FtsQ.

The protein localises to the cell inner membrane. In terms of biological role, essential cell division protein. May link together the upstream cell division proteins, which are predominantly cytoplasmic, with the downstream cell division proteins, which are predominantly periplasmic. The sequence is that of Cell division protein FtsL from Neisseria meningitidis serogroup B (strain ATCC BAA-335 / MC58).